The sequence spans 472 residues: Cysteine--tRNA ligase (472 aa).

Cysteine 29 is a Zn(2+) binding site. Residues 31–41 (PTVYDFAHIGN) carry the 'HIGH' region motif. 3 residues coordinate Zn(2+): cysteine 227, histidine 252, and glutamate 256. Residues 285 to 289 (KMSKS) carry the 'KMSKS' region motif. Position 288 (lysine 288) interacts with ATP.

This sequence belongs to the class-I aminoacyl-tRNA synthetase family. Monomer. Requires Zn(2+) as cofactor.

Its subcellular location is the cytoplasm. The enzyme catalyses tRNA(Cys) + L-cysteine + ATP = L-cysteinyl-tRNA(Cys) + AMP + diphosphate. This chain is Cysteine--tRNA ligase, found in Bradyrhizobium sp. (strain BTAi1 / ATCC BAA-1182).